Reading from the N-terminus, the 126-residue chain is Protein Wnt-1 (126 aa).

A lipid anchor (O-palmitoleoyl serine; by PORCN) is attached at serine 1. Residues cysteine 92 and cysteine 107 are joined by a disulfide bond. N-linked (GlcNAc...) asparagine glycosylation is found at asparagine 93 and asparagine 123.

This sequence belongs to the Wnt family. Palmitoleoylation is required for efficient binding to frizzled receptors. Palmitoleoylation is necessary for proper trafficking to cell surface. Depalmitoleoylated by NOTUM, leading to inhibit Wnt signaling pathway.

The protein localises to the secreted. It localises to the extracellular space. It is found in the extracellular matrix. In terms of biological role, ligand for members of the frizzled family of seven transmembrane receptors. Acts in the canonical Wnt signaling pathway by promoting beta-catenin-dependent transcriptional activation. Plays an essential role in the development of the embryonic brain and central nervous system (CNS). Has a role in osteoblast function, bone development and bone homeostasis. The polypeptide is Protein Wnt-1 (WNT-1) (Pituophis melanoleucus (Pine snake)).